The sequence spans 348 residues: Phage-like element PBSX protein XkdT (348 aa).

It belongs to the Mu gp47/PBSX XkdT family.

This is Phage-like element PBSX protein XkdT (xkdT) from Bacillus subtilis (strain 168).